Here is a 141-residue protein sequence, read N- to C-terminus: Large ribosomal subunit protein uL11 (141 aa).

Belongs to the universal ribosomal protein uL11 family. In terms of assembly, part of the ribosomal stalk of the 50S ribosomal subunit. Interacts with L10 and the large rRNA to form the base of the stalk. L10 forms an elongated spine to which L12 dimers bind in a sequential fashion forming a multimeric L10(L12)X complex. One or more lysine residues are methylated.

Its function is as follows. Forms part of the ribosomal stalk which helps the ribosome interact with GTP-bound translation factors. This is Large ribosomal subunit protein uL11 from Thermotoga neapolitana (strain ATCC 49049 / DSM 4359 / NBRC 107923 / NS-E).